Consider the following 59-residue polypeptide: Large ribosomal subunit protein uL30 (59 aa).

This sequence belongs to the universal ribosomal protein uL30 family. As to quaternary structure, part of the 50S ribosomal subunit.

This is Large ribosomal subunit protein uL30 from Ruminiclostridium cellulolyticum (strain ATCC 35319 / DSM 5812 / JCM 6584 / H10) (Clostridium cellulolyticum).